A 452-amino-acid polypeptide reads, in one-letter code: tRNA modification GTPase MnmE (452 aa).

Residues R23, E81, and K120 each coordinate (6S)-5-formyl-5,6,7,8-tetrahydrofolate. Residues 217–373 (GIKTAIIGQT…LVLRINQMYL (157 aa)) enclose the TrmE-type G domain. N227 serves as a coordination point for K(+). Residues 227 to 232 (NVGKSS), 246 to 252 (TDIPGTT), and 271 to 274 (DTAG) contribute to the GTP site. S231 is a Mg(2+) binding site. 3 residues coordinate K(+): T246, I248, and T251. T252 contributes to the Mg(2+) binding site. K452 serves as a coordination point for (6S)-5-formyl-5,6,7,8-tetrahydrofolate.

It belongs to the TRAFAC class TrmE-Era-EngA-EngB-Septin-like GTPase superfamily. TrmE GTPase family. As to quaternary structure, homodimer. Heterotetramer of two MnmE and two MnmG subunits. The cofactor is K(+).

The protein localises to the cytoplasm. In terms of biological role, exhibits a very high intrinsic GTPase hydrolysis rate. Involved in the addition of a carboxymethylaminomethyl (cmnm) group at the wobble position (U34) of certain tRNAs, forming tRNA-cmnm(5)s(2)U34. The chain is tRNA modification GTPase MnmE from Mycoplasma mycoides subsp. mycoides SC (strain CCUG 32753 / NCTC 10114 / PG1).